The chain runs to 125 residues: Cytochrome c oxidase assembly factor 6 homolog (125 aa).

Glycine 2 is subject to N-acetylalanine. The CHCH domain maps to 55–98 (RQVCWGARDEYWKCLDENLEDASQCKKLRSSFESSCPQQWIKYF). The Cx9C motif motif lies at 58–68 (CWGARDEYWKC). Disulfide bonds link cysteine 58–cysteine 90 and cysteine 68–cysteine 79. The Cx10C motif motif lies at 79-90 (CKKLRSSFESSC).

It belongs to the cytochrome c oxidase subunit 6B family. As to quaternary structure, interacts with COA1. Found in a complex with TMEM177, COX20, MT-CO2/COX2, COX18, SCO1 and SCO2. Interacts with MT-CO2/COX2 and SCO2. Interacts with SCO1. Interacts with COX20 in a MT-CO2/COX2- and COX18-dependent manner. Interacts with COX16.

It localises to the mitochondrion intermembrane space. Its function is as follows. Involved in the maturation of the mitochondrial respiratory chain complex IV subunit MT-CO2/COX2. Thereby, may regulate early steps of complex IV assembly. Mitochondrial respiratory chain complex IV or cytochrome c oxidase is the component of the respiratory chain that catalyzes the transfer of electrons from intermembrane space cytochrome c to molecular oxygen in the matrix and as a consequence contributes to the proton gradient involved in mitochondrial ATP synthesis. May also be required for efficient formation of respiratory supercomplexes comprised of complexes III and IV. This is Cytochrome c oxidase assembly factor 6 homolog (COA6) from Homo sapiens (Human).